Reading from the N-terminus, the 450-residue chain is Nuclear hormone receptor family member nhr-40 (450 aa).

Residues 28–103 (GTLCVVCSDF…MGMDPKAIQH (76 aa)) constitute a DNA-binding region (nuclear receptor). NR C4-type zinc fingers lie at residues 31 to 51 (CVVCSDFASGIHYSVASCNGC) and 67 to 91 (CQFSGDCVVGKSVRCVCRSCRLKKC). The region spanning 173-450 (DVKAVIEDLL…LIDQLIIVGL (278 aa)) is the NR LBD domain.

Belongs to the nuclear hormone receptor family. Isoform b: Expressed in body wall muscle cells, pharyngeal muscles, rectal gland cells, vulval and uterine muscles and neurons in the head and ventral nerve cord. Isoform c: Expressed in body wall muscle cells, neurons in the head, nerve ring, ventral and dorsal nerve cords and epidermal cells in the tail.

It is found in the nucleus. In terms of biological role, orphan nuclear receptor. Plays a role in morphogenesis and elongation during embryonic and larval development. Plays a role in muscle formation and motility. The sequence is that of Nuclear hormone receptor family member nhr-40 from Caenorhabditis elegans.